Reading from the N-terminus, the 840-residue chain is MEKMRGKRIRPRDSGELVEDGRSESERKTRKKENDVVSKGRIGRGRGRGEVSKRSIEIDISNPEKDIKPDGSRKCLGSTCHHCKILTSESDLIFCSKCNKKCYCFDCIKRSYSERTHEEVRAACPFCMMTCICRACLRLPLVIKPPSEKDTDVKLKQLQYLLVKVLPVLKDIYTEQNRELEIESTIRGHPVTEANIKRCKLDPSERIYCDLCRTSIANFHRSCPNKNCSVDICLSCCKELSEGFHQERDGKKNAEGKGYECRIPAGQGKDSDAYVPLHFSTWKLNSDSSIPCPPKECGGCGTSTLELRRLWKRDWVEKLITNAEKCTLNFRPTDVDIVHECSSCSTNSDSIRRQAAFRKNAHDNFLYSPNAVDLAEDDIAHFQFHWMKAEPVIVRNVLEKTSGLSWEPMVMWRACREMDPKRKGTEEETTKVKALDCLDWCEVEINLHQFFEGYLEGRMHKNGWPEMLKLKDWPPSDLFEKRLPRHNAEFIAALPFFDYTDPKSGILNLATRFPEGSLKPDLGPKTYIAYGFHEELNRGDSVTKLHCDISDAVNVLTHTAKVEIPPVKYQNIKVHQKKYAEAMLQKQQYSGQVKEASELENKSMKEVDESKKDLKDKAANEEQSNNSSRPSGSGEAEKVIISKEDNPTQPAVSTSVESIQEQKLDAPKETDGNTNERSKAVHGGAVWDIFRREDVPKLIQFLKRHEHEFRHFNNEPLESVIHPIHDQTMFLSDSQKKQLKEEFDIEPWTFEQHLGEAVFIPAGCPHQVRNRQSCIKVALDFVAPESVEECLRLTQEFRRLPKDHSSSEDKLELKKIALYAASSAIREVKGLMQSSRRSDT.

The segment covering 1-10 has biased composition (basic residues); that stretch reads MEKMRGKRIR. The segment at 1 to 52 is disordered; that stretch reads MEKMRGKRIRPRDSGELVEDGRSESERKTRKKENDVVSKGRIGRGRGRGEVS. Residues 11-38 show a composition bias toward basic and acidic residues; sequence PRDSGELVEDGRSESERKTRKKENDVVS. Zn(2+) is bound by residues cysteine 80, cysteine 83, cysteine 95, cysteine 98, cysteine 104, cysteine 107, cysteine 124, and cysteine 127. The segment at 80 to 127 adopts an RING-type; degenerate zinc-finger fold; sequence CHHCKILTSESDLIFCSKCNKKCYCFDCIKRSYSERTHEEVRAACPFC. The JmjC domain occupies 502-798; sequence PKSGILNLAT…ECLRLTQEFR (297 aa). Histidine 546 and aspartate 548 together coordinate Fe cation. The segment at 594–678 is disordered; sequence KEASELENKS…ETDGNTNERS (85 aa). Over residues 595 to 620 the composition is skewed to basic and acidic residues; that stretch reads EASELENKSMKEVDESKKDLKDKAAN. Over residues 621–631 the composition is skewed to polar residues; the sequence is EEQSNNSSRPS. Positions 635-646 are enriched in basic and acidic residues; sequence EAEKVIISKEDN. Residues 647–659 are compositionally biased toward polar residues; that stretch reads PTQPAVSTSVESI. Residues 660 to 678 show a composition bias toward basic and acidic residues; that stretch reads QEQKLDAPKETDGNTNERS. A Fe cation-binding site is contributed by histidine 766.

This sequence belongs to the JARID1 histone demethylase family. As to quaternary structure, interacts with RPN1A. Fe(2+) is required as a cofactor. Expressed in seedlings, inflorescences, flowers and siliques, and, at low levels, in roots, leaves (including vascular bundles) and stems. Particularly observed in stomatal guard cells.

The protein localises to the nucleus. It is found in the cytoplasm. The catalysed reaction is N(6),N(6)-dimethyl-L-lysyl(9)-[histone H3] + 2-oxoglutarate + O2 = N(6)-methyl-L-lysyl(9)-[histone H3] + formaldehyde + succinate + CO2. It carries out the reaction N(6)-methyl-L-lysyl(9)-[histone H3] + 2-oxoglutarate + O2 = L-lysyl(9)-[histone H3] + formaldehyde + succinate + CO2. The enzyme catalyses N(6),N(6)-dimethyl-L-lysyl(9)-[histone H3] + 2 2-oxoglutarate + 2 O2 = L-lysyl(9)-[histone H3] + 2 formaldehyde + 2 succinate + 2 CO2. Its function is as follows. Histone demethylase that demethylates 'Lys-9' (H3K9me) of histone H3 with a specific activity for H3K9me1 and H3K9me2. No activity on H3K4, H3K27, H3K36, H3R2 and H4R3 methyl marks, but weak activity on H3K9me3. Involved in regulation of gene expression. Regulates flowering time by repressing the major flowering regulator CONSTANS (CO) and promoting FLOWERING LOCUS C (FLC). Exhibits a positive impact on abscisic acid- (ABA), hydrogen peroxide- (H(2)O(2)) and calcium- (Ca(2+)) induced stomatal closure. Promotes stomatal-closure-dependent drought-stress responses through its histone demethylase activity toward at least GOLS2 and RD20 loci, thus protecting them from silencing by removing H3K9me2 marks in drought conditions. Required for plant defenses leading to resistance against the virulent bacterial pathogen Pseudomonas syringae pv. tomato DC3000 (Pst DC3000) via a negative regulation of WRKY25 (a repressor of defense) and by triggering the expression of several pathogenesis-related (PR) proteins (e.g. PR1, PR3, PR4 and PR5). The protein is Lysine-specific demethylase JMJ27 of Arabidopsis thaliana (Mouse-ear cress).